The chain runs to 176 residues: Nucleoside triphosphate/diphosphate phosphatase (176 aa).

Catalysis depends on Arg23, which acts as the Proton donor. Mg(2+)-binding residues include Asn87, Asp103, Asp105, Asp107, Asp120, and Glu123.

This sequence belongs to the Ntdp family. Mg(2+) is required as a cofactor.

The catalysed reaction is a ribonucleoside 5'-triphosphate + H2O = a ribonucleoside 5'-diphosphate + phosphate + H(+). It carries out the reaction a ribonucleoside 5'-diphosphate + H2O = a ribonucleoside 5'-phosphate + phosphate + H(+). Functionally, has nucleoside phosphatase activity towards nucleoside triphosphates and nucleoside diphosphates. The polypeptide is Nucleoside triphosphate/diphosphate phosphatase (yjjG) (Lactococcus lactis subsp. lactis (strain IL1403) (Streptococcus lactis)).